A 613-amino-acid chain; its full sequence is tRNA (uracil-5-)-methyltransferase homolog A (613 aa).

The segment at 1 to 46 (MSEPAAEVPEPMEDCGQDASAVPSSAAPLCQKEEAGPGPAAGPGTQ) is disordered. Residues 63–136 (FKLELQNVPR…CPLSVRLARP (74 aa)) form the RRM domain. A coiled-coil region spans residues 170–200 (YTEQLEQKRLECERVLQKLAKEIGNTNRALL). Ser368 carries the post-translational modification Phosphoserine. 3 residues coordinate S-adenosyl-L-methionine: Gln401, Glu451, and Asp500. Catalysis depends on Cys528, which acts as the Nucleophile. Glu571 acts as the Proton acceptor in catalysis.

It belongs to the class I-like SAM-binding methyltransferase superfamily. RNA M5U methyltransferase family. As to expression, widely expressed at low level. Expressed at higher level in proliferating cells.

The protein resides in the cytoplasm. The protein localises to the cytosol. It carries out the reaction uridine(54) in tRNA + S-adenosyl-L-methionine = 5-methyluridine(54) in tRNA + S-adenosyl-L-homocysteine + H(+). The enzyme catalyses a uridine in mRNA + S-adenosyl-L-methionine = a 5-methyluridine in mRNA + S-adenosyl-L-homocysteine + H(+). Functionally, S-adenosyl-L-methionine-dependent methyltransferase that catalyzes the formation of 5-methyl-uridine in tRNAs and some mRNAs. Mainly catalyzes the methylation of uridine at position 54 (m5U54) in cytosolic tRNAs. Also able to mediate the formation of 5-methyl-uridine in some mRNAs. The sequence is that of tRNA (uracil-5-)-methyltransferase homolog A from Mus musculus (Mouse).